Consider the following 139-residue polypeptide: Plastocyanin (139 aa).

The N-terminal stretch at 1-34 (MKLIAASLRRLSLAVLTVLLVVSSFAVFTPSASA) is a signal peptide. The 105-residue stretch at 35–139 (ETYTVKLGSD…GMVGKITVAG (105 aa)) folds into the Plastocyanin-like domain. Cu cation-binding residues include histidine 73, cysteine 123, histidine 126, and methionine 131.

It belongs to the plastocyanin family. Cu(2+) is required as a cofactor.

It is found in the cellular thylakoid membrane. In terms of biological role, participates in electron transfer between P700 and the cytochrome b6-f complex in photosystem I. In Nostoc sp. (strain PCC 7120 / SAG 25.82 / UTEX 2576), this protein is Plastocyanin (petE).